A 486-amino-acid polypeptide reads, in one-letter code: tRNA-2-methylthio-N(6)-dimethylallyladenosine synthase (486 aa).

An MTTase N-terminal domain is found at 35-151 (RNLYVESYGC…LPRLLATVDS (117 aa)). [4Fe-4S] cluster-binding residues include cysteine 44, cysteine 80, cysteine 114, cysteine 189, cysteine 193, and cysteine 196. Residues 175-419 (NSNGVSAFIS…IDKQRQHSFE (245 aa)) form the Radical SAM core domain. The 64-residue stretch at 422–485 (LKDIGKVYQV…TGTLLGEICT (64 aa)) folds into the TRAM domain.

It belongs to the methylthiotransferase family. MiaB subfamily. As to quaternary structure, monomer. [4Fe-4S] cluster is required as a cofactor.

Its subcellular location is the cytoplasm. It catalyses the reaction N(6)-dimethylallyladenosine(37) in tRNA + (sulfur carrier)-SH + AH2 + 2 S-adenosyl-L-methionine = 2-methylsulfanyl-N(6)-dimethylallyladenosine(37) in tRNA + (sulfur carrier)-H + 5'-deoxyadenosine + L-methionine + A + S-adenosyl-L-homocysteine + 2 H(+). In terms of biological role, catalyzes the methylthiolation of N6-(dimethylallyl)adenosine (i(6)A), leading to the formation of 2-methylthio-N6-(dimethylallyl)adenosine (ms(2)i(6)A) at position 37 in tRNAs that read codons beginning with uridine. The polypeptide is tRNA-2-methylthio-N(6)-dimethylallyladenosine synthase (Amoebophilus asiaticus (strain 5a2)).